A 67-amino-acid polypeptide reads, in one-letter code: Beta-defensin 103 (67 aa).

Residues 1-22 (MRIHYLLFALLFLFLVPVPGHG) form the signal peptide. 3 disulfides stabilise this stretch: C33/C62, C40/C55, and C45/C63.

In terms of tissue distribution, highly expressed in skin and tonsils, and to a lesser extent in trachea, uterus, kidney, thymus, adenoid, pharynx and tongue. Low expression in salivary gland, bone marrow, colon, stomach, polyp and larynx. No expression in small intestine.

The protein resides in the secreted. Functionally, exhibits antimicrobial activity against Gram-positive bacteria S.aureus and S.pyogenes, Gram-negative bacteria P.aeruginosa and E.coli and the yeast C.albicans. Kills multiresistant S.aureus and vancomycin-resistant E.faecium. No significant hemolytic activity was observed. This Homo sapiens (Human) protein is Beta-defensin 103 (DEFB103A).